The primary structure comprises 1104 residues: A disintegrin and metalloproteinase with thrombospondin motifs 10 (1104 aa).

The signal sequence occupies residues 1-25; that stretch reads MASACQILRWALALGLGLTFKVTHA. A propeptide spanning residues 26–233 is cleaved from the precursor; it reads FRSQDELLSS…SERGQLGLKR (208 aa). Residues Asn-90 and Asn-222 are each glycosylated (N-linked (GlcNAc...) asparagine). Residues 239–457 enclose the Peptidase M12B domain; that stretch reads RYVETLVVAD…GLGLCLNNRP (219 aa). 11 cysteine pairs are disulfide-bonded: Cys-315–Cys-376, Cys-351–Cys-358, Cys-370–Cys-452, Cys-409–Cys-436, Cys-479–Cys-501, Cys-490–Cys-508, Cys-496–Cys-531, Cys-521–Cys-536, Cys-559–Cys-596, Cys-563–Cys-601, and Cys-574–Cys-586. His-392 contacts Zn(2+). The active site involves Glu-393. Residues His-396 and His-402 each contribute to the Zn(2+) site. Residues 460–546 form the Disintegrin domain; that stretch reads QDFVYPTVAP…VPFGSRPEGV (87 aa). In terms of domain architecture, TSP type-1 1 spans 547–602; the sequence is DGAWGPWTPWGDCSRSCGGGVSSSSRHCDSPRPTIGGKYCLGERRRHRSCNTNDCP. A spacer region spans residues 706 to 818; it reads ETIEGVFSPA…PALHYRFNAP (113 aa). Asn-740 and Asn-795 each carry an N-linked (GlcNAc...) asparagine glycan. TSP type-1 domains follow at residues 825–885, 888–943, 944–1003, and 1004–1058; these read PPYS…EPCP, WVVG…QGPM, CPPE…RRCP, and PARW…AKCD. Cystine bridges form between Cys-837–Cys-879, Cys-841–Cys-884, and Cys-852–Cys-866. Asn-892 carries an N-linked (GlcNAc...) asparagine glycan. In terms of domain architecture, PLAC spans 1066-1104; that stretch reads GPEECKDVNKVAYCPLVLKFQFCSRAYFRQMCCKTCQGR.

Interacts with FBN1; this interaction promotes microfibrils assembly. The cofactor is Zn(2+). Post-translationally, glycosylated. Can be O-fucosylated by POFUT2 on a serine or a threonine residue found within the consensus sequence C1-X(2)-(S/T)-C2-G of the TSP type-1 repeat domains where C1 and C2 are the first and second cysteine residue of the repeat, respectively. Fucosylated repeats can then be further glycosylated by the addition of a beta-1,3-glucose residue by the glucosyltransferase, B3GALTL. Fucosylation mediates the efficient secretion of ADAMTS family members. Can also be C-glycosylated with one or two mannose molecules on tryptophan residues within the consensus sequence W-X-X-W of the TPRs, and N-glycosylated. These other glycosylations can also facilitate secretion. As to expression, widely expressed in adult tissues.

The protein resides in the secreted. Its subcellular location is the extracellular space. It localises to the extracellular matrix. In terms of biological role, metalloprotease that participate in microfibrils assembly. Microfibrils are extracellular matrix components occurring independently or along with elastin in the formation of elastic tissues. This Mus musculus (Mouse) protein is A disintegrin and metalloproteinase with thrombospondin motifs 10 (Adamts10).